The sequence spans 346 residues: tRNA N6-adenosine threonylcarbamoyltransferase (346 aa).

His-111 and His-115 together coordinate Fe cation. Substrate contacts are provided by residues 134–138, Asp-167, Gly-180, and Asn-279; that span reads LVSGG. Asp-307 contributes to the Fe cation binding site.

This sequence belongs to the KAE1 / TsaD family. Requires Fe(2+) as cofactor.

It localises to the cytoplasm. It catalyses the reaction L-threonylcarbamoyladenylate + adenosine(37) in tRNA = N(6)-L-threonylcarbamoyladenosine(37) in tRNA + AMP + H(+). Required for the formation of a threonylcarbamoyl group on adenosine at position 37 (t(6)A37) in tRNAs that read codons beginning with adenine. Is involved in the transfer of the threonylcarbamoyl moiety of threonylcarbamoyl-AMP (TC-AMP) to the N6 group of A37, together with TsaE and TsaB. TsaD likely plays a direct catalytic role in this reaction. This Burkholderia mallei (strain ATCC 23344) protein is tRNA N6-adenosine threonylcarbamoyltransferase.